A 98-amino-acid chain; its full sequence is UPF0213 protein in ldhD 5'region (98 aa).

One can recognise a GIY-YIG domain in the interval 7–84 (NGFYFYVLWC…KKQSRKEKLK (78 aa)).

The protein belongs to the UPF0213 family.

The protein is UPF0213 protein in ldhD 5'region of Pediococcus acidilactici.